Consider the following 340-residue polypeptide: NADH-quinone oxidoreductase subunit H (340 aa).

Helical transmembrane passes span 4-24 (TIGI…PLLL), 78-98 (YLFV…WAVI), 113-133 (VLYL…AGWA), 151-171 (VSYE…AGSM), 184-204 (MLHW…IAGI), 244-264 (SMIL…LSPF), 273-293 (IFFV…FLFV), and 316-336 (VLIP…VAHV).

It belongs to the complex I subunit 1 family. As to quaternary structure, NDH-1 is composed of 14 different subunits. Subunits NuoA, H, J, K, L, M, N constitute the membrane sector of the complex.

The protein localises to the cell inner membrane. It catalyses the reaction a quinone + NADH + 5 H(+)(in) = a quinol + NAD(+) + 4 H(+)(out). Functionally, NDH-1 shuttles electrons from NADH, via FMN and iron-sulfur (Fe-S) centers, to quinones in the respiratory chain. The immediate electron acceptor for the enzyme in this species is believed to be ubiquinone. Couples the redox reaction to proton translocation (for every two electrons transferred, four hydrogen ions are translocated across the cytoplasmic membrane), and thus conserves the redox energy in a proton gradient. This subunit may bind ubiquinone. This chain is NADH-quinone oxidoreductase subunit H, found in Legionella pneumophila (strain Paris).